Reading from the N-terminus, the 403-residue chain is Na(+)-translocating NADH-quinone reductase subunit B (403 aa).

Helical transmembrane passes span 56-76 (MMIIVWLCTFPAMFFGMYNVG), 121-141 (AYFLPVYLTTFIVGGFWEVLF), 164-184 (LPPSVPLWQVALGISFGVVLG), 225-245 (GFAGATSLSLAAAGGVDNILG), 260-280 (GSMGETSTLAIFIGGAVLLLT), 287-307 (IVAGVMLGMIAMSYLFNAIGS), 312-332 (MFAMPWYWHLVTGGFAFGMIF), 348-368 (WLFGALIGVMVMLIRVVNPAF), and 371-391 (GMMLAILFANLFAPLIDHFVV). Position 230 is an FMN phosphoryl threonine (Thr-230).

It belongs to the NqrB/RnfD family. In terms of assembly, composed of six subunits; NqrA, NqrB, NqrC, NqrD, NqrE and NqrF. The cofactor is FMN.

The protein localises to the cell inner membrane. It catalyses the reaction a ubiquinone + n Na(+)(in) + NADH + H(+) = a ubiquinol + n Na(+)(out) + NAD(+). Its function is as follows. NQR complex catalyzes the reduction of ubiquinone-1 to ubiquinol by two successive reactions, coupled with the transport of Na(+) ions from the cytoplasm to the periplasm. NqrA to NqrE are probably involved in the second step, the conversion of ubisemiquinone to ubiquinol. The sequence is that of Na(+)-translocating NADH-quinone reductase subunit B from Pseudomonas paraeruginosa (strain DSM 24068 / PA7) (Pseudomonas aeruginosa (strain PA7)).